We begin with the raw amino-acid sequence, 239 residues long: MKTNILVKRMAVIGLAVAAACTGAAAAAQGAVPQAQRIIRVLSVAGGDAASPQAAVWKKAPTTQVTLLTAFPGHISIVGTAATQKLAAQAVRASGRLFVRLAWSDRTANTVMKDTDQFLDGAAVEFPVNGKVATLPFMGDPVNVVNVWHWRADGRTLNLLAKGFGTSTPVPTEDLRSASVRTGDGWEVVLSRPLRVKAEEGANLQGRRTMPIGFAAWDGENQERDGLKAVTMEWWQLRF.

An N-terminal signal peptide occupies residues 1-27 (MKTNILVKRMAVIGLAVAAACTGAAAA). 2 residues coordinate heme b: H74 and M138.

Heterotrimer of alpha, beta and gamma subunits. Heme b serves as cofactor.

The protein localises to the periplasm. Functionally, may transfer electrons to the iron-sulfur centers of ClrB. The sequence is that of Chlorate reductase subunit gamma (clrC) from Ideonella dechloratans.